The primary structure comprises 262 residues: Ornithine carbamoyltransferase (262 aa).

Carbamoyl phosphate-binding positions include 3–7, Gln30, Arg54, and 81–84; these read STRTR and HPTQ. L-ornithine is bound by residues Asn114, Asp178, and 182–183; that span reads SM. Residues 219 to 222 and Thr247 each bind carbamoyl phosphate; that span reads HCLP.

This sequence belongs to the aspartate/ornithine carbamoyltransferase superfamily. OTCase family.

It localises to the cytoplasm. It catalyses the reaction carbamoyl phosphate + L-ornithine = L-citrulline + phosphate + H(+). The protein operates within amino-acid biosynthesis; L-arginine biosynthesis; L-arginine from L-ornithine and carbamoyl phosphate: step 1/3. In terms of biological role, reversibly catalyzes the transfer of the carbamoyl group from carbamoyl phosphate (CP) to the N(epsilon) atom of ornithine (ORN) to produce L-citrulline. This chain is Ornithine carbamoyltransferase (argF), found in Neisseria polysaccharea.